The following is a 270-amino-acid chain: Chlorophyll a-b binding protein, chloroplastic (270 aa).

A chloroplast-targeting transit peptide spans 1-41; the sequence is MASACASSTIAAVAFSSPSSQKNGSIVGATKASFLGGKRLR. W68 provides a ligand contact to chlorophyll b. F88, E107, and H110 together coordinate chlorophyll a. Chlorophyll b is bound at residue R112. Residues 113–133 traverse the membrane as a helical segment; sequence WAMLGAAGIFIPEFLTKIGVL. Position 144 (Q144) interacts with chlorophyll a. Residues 146 to 166 form a helical membrane-spanning segment; sequence YFTDTTTLFVIELVLIGWAEG. Chlorophyll b-binding residues include V155, E165, and R168. Residues K221, E222, N225, R227, Q239, and H254 each contribute to the chlorophyll a site. The helical transmembrane segment at 228 to 248 threads the bilayer; sequence LAMLAVMGAWFQHIYTGTGPI.

The protein belongs to the light-harvesting chlorophyll a/b-binding (LHC) protein family. The LHC complex consists of chlorophyll a-b binding proteins. Binds at least 14 chlorophylls (8 Chl-a and 6 Chl-b) and carotenoids such as lutein and neoxanthin. is required as a cofactor. Post-translationally, photoregulated by reversible phosphorylation of its threonine residues.

The protein localises to the plastid. It localises to the chloroplast thylakoid membrane. The light-harvesting complex (LHC) functions as a light receptor, it captures and delivers excitation energy to photosystems with which it is closely associated. This chain is Chlorophyll a-b binding protein, chloroplastic, found in Petunia hybrida (Petunia).